The sequence spans 72 residues: Inner membrane protein YmgF (72 aa).

Residues 1–9 (MNNSNNLDY) are Cytoplasmic-facing. A helical membrane pass occupies residues 10 to 30 (FTLYIIFSIAFMLITLLVILI). Topologically, residues 31–34 (AKPS) are periplasmic. The helical transmembrane segment at 35 to 55 (TGLGEVLVTINLLNALVWLAI) threads the bilayer. Over 56-72 (NLVNRLRERLVNHRDQQ) the chain is Cytoplasmic.

Interacts with FtsL, FtsQ, FtsI, FtsN, and probably many other cell division proteins.

It localises to the cell inner membrane. Its function is as follows. Could be involved in cell division. May participate in the stabilization of the cell divisome under specific conditions. The polypeptide is Inner membrane protein YmgF (ymgF) (Escherichia coli (strain K12)).